We begin with the raw amino-acid sequence, 321 residues long: Lipoyl synthase (321 aa).

Residues Cys-68, Cys-73, Cys-79, Cys-94, Cys-98, Cys-101, and Ser-308 each contribute to the [4Fe-4S] cluster site. A Radical SAM core domain is found at 80 to 297 (FNHGTATFMI…KEQALAMGFT (218 aa)).

The protein belongs to the radical SAM superfamily. Lipoyl synthase family. The cofactor is [4Fe-4S] cluster.

The protein localises to the cytoplasm. It catalyses the reaction [[Fe-S] cluster scaffold protein carrying a second [4Fe-4S](2+) cluster] + N(6)-octanoyl-L-lysyl-[protein] + 2 oxidized [2Fe-2S]-[ferredoxin] + 2 S-adenosyl-L-methionine + 4 H(+) = [[Fe-S] cluster scaffold protein] + N(6)-[(R)-dihydrolipoyl]-L-lysyl-[protein] + 4 Fe(3+) + 2 hydrogen sulfide + 2 5'-deoxyadenosine + 2 L-methionine + 2 reduced [2Fe-2S]-[ferredoxin]. It participates in protein modification; protein lipoylation via endogenous pathway; protein N(6)-(lipoyl)lysine from octanoyl-[acyl-carrier-protein]: step 2/2. Its function is as follows. Catalyzes the radical-mediated insertion of two sulfur atoms into the C-6 and C-8 positions of the octanoyl moiety bound to the lipoyl domains of lipoate-dependent enzymes, thereby converting the octanoylated domains into lipoylated derivatives. This chain is Lipoyl synthase, found in Proteus mirabilis (strain HI4320).